A 462-amino-acid polypeptide reads, in one-letter code: 3-isopropylmalate dehydratase large subunit (462 aa).

[4Fe-4S] cluster-binding residues include C337, C397, and C400.

It belongs to the aconitase/IPM isomerase family. LeuC type 1 subfamily. In terms of assembly, heterodimer of LeuC and LeuD. The cofactor is [4Fe-4S] cluster.

It carries out the reaction (2R,3S)-3-isopropylmalate = (2S)-2-isopropylmalate. Its pathway is amino-acid biosynthesis; L-leucine biosynthesis; L-leucine from 3-methyl-2-oxobutanoate: step 2/4. In terms of biological role, catalyzes the isomerization between 2-isopropylmalate and 3-isopropylmalate, via the formation of 2-isopropylmaleate. This Listeria monocytogenes serovar 1/2a (strain ATCC BAA-679 / EGD-e) protein is 3-isopropylmalate dehydratase large subunit.